Here is a 231-residue protein sequence, read N- to C-terminus: Ribose-5-phosphate isomerase A (231 aa).

Residues 32 to 35, 85 to 88, and 98 to 101 contribute to the substrate site; these read TGST, DGAD, and KGGG. The Proton acceptor role is filled by E107. K125 contributes to the substrate binding site.

The protein belongs to the ribose 5-phosphate isomerase family. Homodimer.

The enzyme catalyses aldehydo-D-ribose 5-phosphate = D-ribulose 5-phosphate. It participates in carbohydrate degradation; pentose phosphate pathway; D-ribose 5-phosphate from D-ribulose 5-phosphate (non-oxidative stage): step 1/1. Catalyzes the reversible conversion of ribose-5-phosphate to ribulose 5-phosphate. The protein is Ribose-5-phosphate isomerase A of Paraburkholderia xenovorans (strain LB400).